Reading from the N-terminus, the 563-residue chain is DNA polymerase III subunit tau (563 aa).

ATP is bound at residue 45–52 (GPRGTGKT). Zn(2+) contacts are provided by C64, C73, C76, and C79.

It belongs to the DnaX/STICHEL family. As to quaternary structure, component of the DNA clamp loading complex consisting of tau(3):delta(1):delta'(1). The DNA polymerase III holoenzyme complex contains at least 10 different subunits organized into 3 functionally essential subassemblies: the Pol III core, the beta sliding clamp processivity factor and the clamp-loading complex. The Pol III core (subunits alpha, epsilon and theta) contains the polymerase and the 3'-5' exonuclease proofreading activities. The polymerase is tethered to the template via the dimeric beta sliding clamp processivity factor. The DNA clamp-loading complex assembles the beta sliding clamp onto the primed template and plays a central role in the organization and communication at the replication fork. Forms a complex with replicative DNA helicase DnaB (shown with G.stearothermophilus DnaB) tau(3):DnaB(6); a single ATP hydrolysis even is sufficient for complex formation. Colocalizes with DNA helicases PriA, RecQ and RecS.

Its subcellular location is the cytoplasm. It is found in the nucleoid. The catalysed reaction is DNA(n) + a 2'-deoxyribonucleoside 5'-triphosphate = DNA(n+1) + diphosphate. Its function is as follows. Part of the beta sliding clamp loading complex, which hydrolyzes ATP to load the beta clamp onto primed DNA to form the DNA replication pre-initiation complex. DNA polymerase III is a complex, multichain enzyme responsible for most of the replicative DNA synthesis in bacteria. The sequence is that of DNA polymerase III subunit tau from Bacillus subtilis (strain 168).